Consider the following 101-residue polypeptide: Small ribosomal subunit protein uS14 (101 aa).

It belongs to the universal ribosomal protein uS14 family. As to quaternary structure, part of the 30S ribosomal subunit. Contacts proteins S3 and S10.

In terms of biological role, binds 16S rRNA, required for the assembly of 30S particles and may also be responsible for determining the conformation of the 16S rRNA at the A site. The protein is Small ribosomal subunit protein uS14 of Leptothrix cholodnii (strain ATCC 51168 / LMG 8142 / SP-6) (Leptothrix discophora (strain SP-6)).